Consider the following 189-residue polypeptide: UPF0340 protein SAG0103 (189 aa).

The protein belongs to the UPF0340 family.

The polypeptide is UPF0340 protein SAG0103 (Streptococcus agalactiae serotype V (strain ATCC BAA-611 / 2603 V/R)).